The sequence spans 427 residues: MPALVLIGAQWGDEGKGKATDLLGGAVDYVVRYQGGNNAGHTVVIGEERYALHLIPSGILRADCVPVIGNGVVIDPGVLLTEMDGLAARGIDVSRLLISANAHLIMPHHRALDRVTERYLGKARIGTTGRGIGPTYGDKVARTGIRVQDLLDPGIFRKKLELALREKNQVLAKVYNRRRIEVDEVVEEYAAYAERLGPHIADTGLVLDRALREGKVVLLEGSQGTLLDVDHGSYPFVTSSNPTAGYAATGAGIGPTRINRVVGIIKAYTTRVGAGPFPTELDDKVGEELRRIGGEFGVTTGRARRTGWFDAVIARYAVRVNGLTDLFLTKLDVLSGFDRVPICVGYDIGGERVDEMPMTQTEFHHARPIYTELPGWQEDLSDVRKYADLPAAAKDYIRTLEELSGAPVSAIGVGPGRDQTLVINDLV.

Residues 12–18 and 40–42 each bind GTP; these read GDEGKGK and GHT. The Proton acceptor role is filled by aspartate 13. Mg(2+)-binding residues include aspartate 13 and glycine 40. IMP contacts are provided by residues 13-16, 38-41, threonine 128, arginine 142, glutamine 223, threonine 238, and arginine 302; these read DEGK and NAGH. Histidine 41 acts as the Proton donor in catalysis. 298-304 lines the substrate pocket; sequence VTTGRAR. GTP contacts are provided by residues arginine 304, 330-332, and 412-414; these read KLD and GVG.

This sequence belongs to the adenylosuccinate synthetase family. In terms of assembly, homodimer. The cofactor is Mg(2+).

It localises to the cytoplasm. The enzyme catalyses IMP + L-aspartate + GTP = N(6)-(1,2-dicarboxyethyl)-AMP + GDP + phosphate + 2 H(+). The protein operates within purine metabolism; AMP biosynthesis via de novo pathway; AMP from IMP: step 1/2. In terms of biological role, plays an important role in the de novo pathway of purine nucleotide biosynthesis. Catalyzes the first committed step in the biosynthesis of AMP from IMP. The sequence is that of Adenylosuccinate synthetase from Frankia alni (strain DSM 45986 / CECT 9034 / ACN14a).